A 772-amino-acid polypeptide reads, in one-letter code: Angiomotin-like protein 2 (772 aa).

3 disordered regions span residues 41–158 (GGAG…HVRS), 170–239 (RNGA…SPHF), and 260–299 (QYQYLPQPQEHSPPLHPAALGHGPPSSFGPPAVEGPPSAQ). Composition is skewed to basic and acidic residues over residues 80 to 91 (QGGETHLAENRL), 100 to 112 (KGEELPTYEEAKA), and 142 to 153 (RRQDEALRELRH). The interval 101 to 303 (GEELPTYEEA…GPPSAQATLG (203 aa)) is required for interaction with CDH5. Tyrosine 107 bears the Phosphotyrosine; by FGFR1 mark. Residues 178-191 (HMSSSHSFPQLARS) are compositionally biased toward polar residues. Over residues 197–214 (PRGPPAEGPEPRGPPPQY) the composition is skewed to pro residues. Residues 221-303 (QETAAVTDPR…GPPSAQATLG (83 aa)) form a required for interaction with CDH1 region. The stretch at 305–578 (AHLAQMETVL…KYLEERAMRQ (274 aa)) forms a coiled coil. Glycyl lysine isopeptide (Lys-Gly) (interchain with G-Cter in ubiquitin) cross-links involve residues lysine 343 and lysine 404. 2 disordered regions span residues 596–615 (IRHSPQPSPSSSFNEGLLPG) and 680–752 (GLVS…RTPS). The segment covering 686–699 (RQTDARPAGDRVPA) has biased composition (basic and acidic residues). Over residues 718–733 (DGSTQTDGPADNTSAC) the composition is skewed to polar residues. Phosphoserine occurs at positions 752 and 755. Positions 769 to 772 (EILI) match the PDZ-binding motif.

This sequence belongs to the angiomotin family. In terms of assembly, part of a complex composed of AMOTL2, MAGI1 and CDH5, within the complex AMOTL2 acts as a scaffold protein for the interaction of MAGI1 with CDH5. The complex is required for coupling actin fibers to cell junctions in endothelial cells. Within the complex AMOTL2 (via its N-terminus) interacts with CDH5. Interacts (via N-terminus) with MAGI1. Interacts (via N-terminus) with ACTB; the interaction facilitates binding of cell junction complexes to actin fibers in endothelial cells. Interacts with CDH1; the interaction may facilitate binding of radial actin fibers to cell junction complexes. Interacts with SRC. Interacts with YAP1; the interaction is required for ubiquitination of AMOTL2 and localization of YAP1 to tight junctions. Interacts with WWP1; the interaction facilitates WWP1 interaction with the Crumbs complex and subsequent WWP1 translocation to the plasma membrane. WWP1 interaction with the Crumbs complex promotes WWP1 monoubiquitination of AMOTL2 which subsequently activates the Hippo signaling pathway. When ubiquitinated interacts with LATS2 (via UBA domain); the interaction promotes LATS2 phosphorylation of YAP1. Interacts (via PPXY motif) with WWTR1/TAZ (via WW domain); the interaction promotes WWTR1/TAZ localization to the cytoplasm and thereby inhibition of its transcriptional properties. Interacts with PHLDB2; interaction may facilitate PHLDB2 localization to the myotube podosome cortex that surrounds the core. Phosphorylation at Tyr-107 is necessary for efficient binding to SRC and synergistically functioning with SRC to activate the downstream MAPK pathway. Post-translationally, monoubiquitinated at Lys-343 and Lys-404 by Crumbs complex-bound WWP1. De-ubiquitinated at Lys-343 and Lys-404 by USP9X; the interaction may be promoted by cell contact inhibition. Deubiquitination of AMOTL2 negatively regulates Hippo signaling activation. As to expression, expressed in skeletal muscle at neuromuscular junctions (at protein level).

The protein resides in the recycling endosome. The protein localises to the cytoplasm. It localises to the cell projection. Its subcellular location is the podosome. It is found in the cell junction. In terms of biological role, regulates the translocation of phosphorylated SRC to peripheral cell-matrix adhesion sites. Required for proper architecture of actin filaments. Plays a role in coupling actin fibers to cell junctions in endothelial cells and is therefore required for correct endothelial cell morphology via facilitating transcellular transmission of mechanical force resulting in endothelial cell elongation. Required for the anchoring of radial actin fibers to CDH1 junction complexes at the cell membrane which facilitates organization of radial actin fiber structure and cellular response to contractile forces. This contributes to maintenance of cell area, size, shape, epithelial sheet organization and trophectoderm cell properties that facilitate blastocyst zona hatching. Inhibits the Wnt/beta-catenin signaling pathway, probably by recruiting CTNNB1 to recycling endosomes and hence preventing its translocation to the nucleus. Participates in angiogenesis. Activates the Hippo signaling pathway in response to cell contact inhibition via interaction with and ubiquitination by Crumbs complex-bound WWP1. Ubiquitinated AMOTL2 then interacts with LATS2 which in turn phosphorylates YAP1, excluding it from the nucleus and localizing it to the cytoplasm and tight junctions, therefore ultimately repressing YAP1-driven transcription of target genes. Acts to inhibit WWTR1/TAZ transcriptional coactivator activity via sequestering WWTR1/TAZ in the cytoplasm and at tight junctions. Regulates the size and protein composition of the podosome cortex and core at myofibril neuromuscular junctions. Selectively promotes FGF-induced MAPK activation through SRC. May play a role in the polarity, proliferation and migration of endothelial cells. The polypeptide is Angiomotin-like protein 2 (Mus musculus (Mouse)).